The primary structure comprises 353 residues: uncharacterized protein (353 aa).

The first 30 residues, Met-1–Ala-30, serve as a signal peptide directing secretion.

As to quaternary structure, monomer.

This is an uncharacterized protein from Escherichia coli (strain K12).